The primary structure comprises 250 residues: AA9 family lytic polysaccharide monooxygenase F (250 aa).

The first 21 residues, 1 to 21 (MAMSKIATLAGLLASAGLVAG), serve as a signal peptide directing secretion. Cu(2+) is bound at residue His22. Asp51 contributes to the O2 binding site. 2 disulfides stabilise this stretch: Cys77–Cys200 and Cys121–Cys125. Residue His107 coordinates Cu(2+). Residues His186 and Gln195 each coordinate O2. Tyr197 is a binding site for Cu(2+).

It belongs to the glycosyl hydrolase 61 family. Cu(2+) is required as a cofactor.

The protein localises to the secreted. The enzyme catalyses Endohydrolysis of (1-&gt;4)-beta-D-glucosidic linkages in cellulose, lichenin and cereal beta-D-glucans.. Lytic polysaccharide monooxygenase (LMPO) that depolymerizes crystalline and amorphous polysaccharides via the oxidation of scissile alpha- or beta-(1-4)-glycosidic bonds, yielding C1 or C4 oxidation products. Catalysis by LPMOs requires the reduction of the active-site copper from Cu(II) to Cu(I) by a reducing agent and H(2)O(2) or O(2) as a cosubstrate. Major secreted component of the extracellular cellulolytic system. In Emericella nidulans (strain FGSC A4 / ATCC 38163 / CBS 112.46 / NRRL 194 / M139) (Aspergillus nidulans), this protein is AA9 family lytic polysaccharide monooxygenase F.